Here is a 37-residue protein sequence, read N- to C-terminus: Large ribosomal subunit protein bL36c (37 aa).

It belongs to the bacterial ribosomal protein bL36 family.

The protein localises to the plastid. The protein resides in the chloroplast. The chain is Large ribosomal subunit protein bL36c from Lolium perenne (Perennial ryegrass).